We begin with the raw amino-acid sequence, 664 residues long: Transketolase 1 (664 aa).

H26 serves as a coordination point for substrate. Residues H66 and 114-116 (GPL) each bind thiamine diphosphate. A Mg(2+)-binding site is contributed by D155. 2 residues coordinate thiamine diphosphate: G156 and N185. Mg(2+) contacts are provided by N185 and I187. The substrate site is built by H260, R357, and S384. H260 serves as a coordination point for thiamine diphosphate. The Proton donor role is filled by E411. F437 serves as a coordination point for thiamine diphosphate. Positions 461, 469, and 520 each coordinate substrate.

The protein belongs to the transketolase family. In terms of assembly, homodimer. The cofactor is Mg(2+). Ca(2+) serves as cofactor. Mn(2+) is required as a cofactor. It depends on Co(2+) as a cofactor. Requires thiamine diphosphate as cofactor.

The enzyme catalyses D-sedoheptulose 7-phosphate + D-glyceraldehyde 3-phosphate = aldehydo-D-ribose 5-phosphate + D-xylulose 5-phosphate. Functionally, catalyzes the transfer of a two-carbon ketol group from a ketose donor to an aldose acceptor, via a covalent intermediate with the cofactor thiamine pyrophosphate. The protein is Transketolase 1 (tkt1) of Vibrio parahaemolyticus serotype O3:K6 (strain RIMD 2210633).